A 572-amino-acid chain; its full sequence is ATP-dependent lipid A-core flippase (572 aa).

A run of 5 helical transmembrane segments spans residues 14–34 (IIPY…VAAL), 55–75 (VFFL…KGVL), 148–168 (IFLL…CFLI), 249–269 (MEII…SEVI), and 272–292 (SATP…YDPV). The region spanning 22–304 (FIAMFAMIVV…VSQVNSTIQQ (283 aa)) is the ABC transmembrane type-1 domain. Residues 338–571 (IEFHDVSFSY…EGEYQLLYNM (234 aa)) enclose the ABC transporter domain. Residue 370–377 (GPSGGGKT) participates in ATP binding.

The protein belongs to the ABC transporter superfamily. Lipid exporter (TC 3.A.1.106) family. Homodimer.

The protein resides in the cell inner membrane. It catalyses the reaction ATP + H2O + lipid A-core oligosaccharideSide 1 = ADP + phosphate + lipid A-core oligosaccharideSide 2.. In terms of biological role, involved in lipopolysaccharide (LPS) biosynthesis. Translocates lipid A-core from the inner to the outer leaflet of the inner membrane. Transmembrane domains (TMD) form a pore in the inner membrane and the ATP-binding domain (NBD) is responsible for energy generation. The chain is ATP-dependent lipid A-core flippase from Desulfotalea psychrophila (strain LSv54 / DSM 12343).